The chain runs to 393 residues: Small ribosomal subunit protein bS1 (393 aa).

S1 motif domains follow at residues Gly-16–Arg-90, Asn-108–Lys-173, Gly-194–Lys-262, and Gly-279–Lys-348. Over residues Val-356–Asp-369 the composition is skewed to polar residues. The interval Val-356–Gly-381 is disordered.

It belongs to the bacterial ribosomal protein bS1 family.

Its function is as follows. Binds mRNA; thus facilitating recognition of the initiation point. It is needed to translate mRNA with a short Shine-Dalgarno (SD) purine-rich sequence. The chain is Small ribosomal subunit protein bS1 (rpsA) from Staphylococcus saprophyticus subsp. saprophyticus (strain ATCC 15305 / DSM 20229 / NCIMB 8711 / NCTC 7292 / S-41).